The chain runs to 310 residues: HPr kinase/phosphorylase (310 aa).

Residues His-136 and Lys-157 contribute to the active site. ATP is bound at residue 151-158 (GDSGIGKS). Ser-158 provides a ligand contact to Mg(2+). Asp-175 (proton acceptor; for phosphorylation activity. Proton donor; for dephosphorylation activity) is an active-site residue. The important for the catalytic mechanism of both phosphorylation and dephosphorylation stretch occupies residues 199–208 (LEIRGLGIIN). Glu-200 contributes to the Mg(2+) binding site. Arg-241 is an active-site residue. The interval 262-267 (PVRPGR) is important for the catalytic mechanism of dephosphorylation.

The protein belongs to the HPrK/P family. As to quaternary structure, homohexamer. Requires Mg(2+) as cofactor.

It carries out the reaction [HPr protein]-L-serine + ATP = [HPr protein]-O-phospho-L-serine + ADP + H(+). It catalyses the reaction [HPr protein]-O-phospho-L-serine + phosphate + H(+) = [HPr protein]-L-serine + diphosphate. In terms of biological role, catalyzes the ATP- as well as the pyrophosphate-dependent phosphorylation of a specific serine residue in HPr, a phosphocarrier protein of the phosphoenolpyruvate-dependent sugar phosphotransferase system (PTS). HprK/P also catalyzes the pyrophosphate-producing, inorganic phosphate-dependent dephosphorylation (phosphorolysis) of seryl-phosphorylated HPr (P-Ser-HPr). The two antagonistic activities of HprK/P are regulated by several intracellular metabolites, which change their concentration in response to the absence or presence of rapidly metabolisable carbon sources (glucose, fructose, etc.) in the growth medium. Therefore, by controlling the phosphorylation state of HPr, HPrK/P is a sensor enzyme that plays a major role in the regulation of carbon metabolism and sugar transport: it mediates carbon catabolite repression (CCR), and regulates PTS-catalyzed carbohydrate uptake and inducer exclusion. The chain is HPr kinase/phosphorylase from Staphylococcus aureus (strain Mu3 / ATCC 700698).